Here is a 500-residue protein sequence, read N- to C-terminus: Maturase K (500 aa).

The protein belongs to the intron maturase 2 family. MatK subfamily.

Its subcellular location is the plastid. The protein resides in the chloroplast. Its function is as follows. Usually encoded in the trnK tRNA gene intron. Probably assists in splicing its own and other chloroplast group II introns. The chain is Maturase K from Fragaria vesca (Woodland strawberry).